We begin with the raw amino-acid sequence, 254 residues long: 3-deoxy-manno-octulosonate cytidylyltransferase (254 aa).

The protein belongs to the KdsB family.

The protein localises to the cytoplasm. It carries out the reaction 3-deoxy-alpha-D-manno-oct-2-ulosonate + CTP = CMP-3-deoxy-beta-D-manno-octulosonate + diphosphate. Its pathway is nucleotide-sugar biosynthesis; CMP-3-deoxy-D-manno-octulosonate biosynthesis; CMP-3-deoxy-D-manno-octulosonate from 3-deoxy-D-manno-octulosonate and CTP: step 1/1. It participates in bacterial outer membrane biogenesis; lipopolysaccharide biosynthesis. Its function is as follows. Activates KDO (a required 8-carbon sugar) for incorporation into bacterial lipopolysaccharide in Gram-negative bacteria. The protein is 3-deoxy-manno-octulosonate cytidylyltransferase of Porphyromonas gingivalis (strain ATCC BAA-308 / W83).